Here is a 167-residue protein sequence, read N- to C-terminus: S-ribosylhomocysteine lyase (167 aa).

Fe cation is bound by residues H54, H58, and C128.

Belongs to the LuxS family. As to quaternary structure, homodimer. It depends on Fe cation as a cofactor.

It carries out the reaction S-(5-deoxy-D-ribos-5-yl)-L-homocysteine = (S)-4,5-dihydroxypentane-2,3-dione + L-homocysteine. In terms of biological role, involved in the synthesis of autoinducer 2 (AI-2) which is secreted by bacteria and is used to communicate both the cell density and the metabolic potential of the environment. The regulation of gene expression in response to changes in cell density is called quorum sensing. Catalyzes the transformation of S-ribosylhomocysteine (RHC) to homocysteine (HC) and 4,5-dihydroxy-2,3-pentadione (DPD). This Sulfurimonas denitrificans (strain ATCC 33889 / DSM 1251) (Thiomicrospira denitrificans (strain ATCC 33889 / DSM 1251)) protein is S-ribosylhomocysteine lyase.